The chain runs to 316 residues: FAD:protein FMN transferase (316 aa).

Residues Met-14, 88 to 90 (AFN), and Asp-146 contribute to the FAD site. Mg(2+) is bound at residue Ala-149. FAD is bound by residues Lys-152 and Leu-231. Residues Asp-257 and Thr-261 each contribute to the Mg(2+) site.

This sequence belongs to the ApbE family. Mg(2+) is required as a cofactor.

It is found in the cytoplasm. The catalysed reaction is L-threonyl-[protein] + FAD = FMN-L-threonyl-[protein] + AMP + H(+). Its function is as follows. Flavin transferase that catalyzes the transfer of the FMN moiety of FAD and its covalent binding to the hydroxyl group of a threonine residue in a target flavoprotein. Is responsible for the modification of the fumarate reductase KPK_2907. This chain is FAD:protein FMN transferase, found in Klebsiella pneumoniae (strain 342).